The sequence spans 420 residues: Tyrosine-protein phosphatase non-receptor type 20 (420 aa).

A compositionally biased stretch (basic and acidic residues) spans 1–11 (MSSPRDFRAEP). Disordered stretches follow at residues 1–47 (MSSP…VFEN) and 68–108 (DVFE…SQAL). Positions 31–41 (LPSSSQENTPR) are enriched in polar residues. 2 positions are modified to phosphoserine: Ser76 and Ser120. Positions 159–412 (IMQEFMALEL…HFCYDIVLEV (254 aa)) constitute a Tyrosine-protein phosphatase domain. Substrate-binding positions include Asp323, 353–359 (CSAGIGR), and Gln397. Catalysis depends on Cys353, which acts as the Phosphocysteine intermediate.

It belongs to the protein-tyrosine phosphatase family. Non-receptor class subfamily. As to expression, present in many cell lines (at protein level). Widely expressed.

The protein localises to the nucleus. The protein resides in the cytoplasm. Its subcellular location is the cytoskeleton. It localises to the microtubule organizing center. It is found in the centrosome. The catalysed reaction is O-phospho-L-tyrosyl-[protein] + H2O = L-tyrosyl-[protein] + phosphate. Functionally, tyrosine-protein phosphatase targeted to sites of actin polymerization in response of varied extracellular stimuli. Has tyrosine phosphatase activity towards various tyrosyl phosphorylated substrates. The chain is Tyrosine-protein phosphatase non-receptor type 20 from Homo sapiens (Human).